We begin with the raw amino-acid sequence, 278 residues long: Potassium/proton antiporter CemA (278 aa).

4 consecutive transmembrane segments (helical) span residues 61–81 (IFLL…FDFG), 155–175 (AVKN…LMIT), 203–223 (IILF…EVII), and 238–258 (FIFL…KYWI).

This sequence belongs to the CemA family.

Its subcellular location is the plastid. It localises to the chloroplast inner membrane. It catalyses the reaction K(+)(in) + H(+)(out) = K(+)(out) + H(+)(in). Contributes to K(+)/H(+) antiport activity by supporting proton efflux to control proton extrusion and homeostasis in chloroplasts in a light-dependent manner to modulate photosynthesis. Prevents excessive induction of non-photochemical quenching (NPQ) under continuous-light conditions. Indirectly promotes efficient inorganic carbon uptake into chloroplasts. The sequence is that of Potassium/proton antiporter CemA from Porphyra purpurea (Red seaweed).